The sequence spans 623 residues: Replication protein A 70 kDa DNA-binding subunit (623 aa).

An N-acetylmethionine modification is found at Met1. Glycyl lysine isopeptide (Lys-Gly) (interchain with G-Cter in ubiquitin) cross-links involve residues Lys22 and Lys88. The interval 116–163 is disordered; it reads VPYNEGYGQQQQQQQQQQQQAVPSPASAATPPASKPQPQNGSLGMGST. Over residues 124 to 154 the composition is skewed to low complexity; that stretch reads QQQQQQQQQQQQAVPSPASAATPPASKPQPQ. N6-acetyllysine; alternate is present on residues Lys172 and Lys176. Residues Lys172 and Lys176 each participate in a glycyl lysine isopeptide (Lys-Gly) (interchain with G-Cter in ubiquitin); alternate cross-link. Thr189 is subject to Phosphothreonine. Residue Lys192 forms a Glycyl lysine isopeptide (Lys-Gly) (interchain with G-Cter in ubiquitin) linkage. Thr200 is subject to Phosphothreonine. The OB DNA-binding region spans 206–290; sequence WTICARVTNK…VKNDYEMTFN (85 aa). Residues Lys229 and Lys253 each participate in a glycyl lysine isopeptide (Lys-Gly) (interchain with G-Cter in ubiquitin) cross-link. Lys268 is subject to N6-acetyllysine; alternate. Residue Lys268 forms a Glycyl lysine isopeptide (Lys-Gly) (interchain with G-Cter in ubiquitin); alternate linkage. Residues Lys276 and Lys340 each participate in a glycyl lysine isopeptide (Lys-Gly) (interchain with G-Cter in ubiquitin) cross-link. Ser393 is modified (phosphoserine). Residue Lys419 forms a Glycyl lysine isopeptide (Lys-Gly) (interchain with G-Cter in ubiquitin) linkage. Lys458 participates in a covalent cross-link: Glycyl lysine isopeptide (Lys-Gly) (interchain with G-Cter in SUMO). A Glycyl lysine isopeptide (Lys-Gly) (interchain with G-Cter in ubiquitin) cross-link involves residue Lys467. A C4-type zinc finger spans residues 490 to 512; the sequence is CPTQDCNKKVIDQQNGLYRCEKC. Residue Lys562 forms a Glycyl lysine isopeptide (Lys-Gly) (interchain with G-Cter in ubiquitin) linkage. Lys586 is covalently cross-linked (Glycyl lysine isopeptide (Lys-Gly) (interchain with G-Cter in SUMO)).

Belongs to the replication factor A protein 1 family. As to quaternary structure, component of the canonical replication protein A complex (RPA), a heterotrimer composed of RPA1, RPA2 and RPA3. The DNA-binding activity may reside exclusively on the RPA1 subunit. Interacts with PRPF19; the PRP19-CDC5L complex is recruited to the sites of DNA repair where it ubiquitinates the replication protein A complex (RPA). Interacts with RIPK1. Interacts with the polymerase alpha subunit POLA1/p180; this interaction stabilizes the replicative complex and reduces the misincorporation rate of DNA polymerase alpha by acting as a fidelity clamp. Interacts with RAD51 and SENP6 to regulate DNA repair. Interacts with HELB; this interaction promotes HELB recruitment to chromatin following DNA damage. Interacts with PRIMPOL; leading to recruit PRIMPOL on chromatin and stimulate its DNA primase activity. Interacts with XPA; the interaction is direct and associates XPA with the RPA complex. Interacts with ETAA1; the interaction is direct and promotes ETAA1 recruitment at stalled replication forks. Interacts with RPA1; this interaction associates HROB with the RPA complex. Interacts (when poly-ADP-ribosylated) with HTATSF1. Post-translationally, DNA damage-induced 'Lys-63'-linked polyubiquitination by PRPF19 mediates ATRIP recruitment to the RPA complex at sites of DNA damage and activation of ATR. Ubiquitinated by RFWD3 at stalled replication forks in response to DNA damage: ubiquitination by RFWD3 does not lead to degradation by the proteasome and promotes removal of the RPA complex from stalled replication forks, promoting homologous recombination. In terms of processing, sumoylated on lysine residues Lys-458 and Lys-586, with Lys-458 being the major site. Sumoylation promotes recruitment of RAD51 to the DNA damage foci to initiate DNA repair through homologous recombination. Desumoylated by SENP6. Poly-ADP-ribosylated by PARP1; promoting recruitment of HTATSF1.

The protein localises to the nucleus. It is found in the PML body. As part of the heterotrimeric replication protein A complex (RPA/RP-A), binds and stabilizes single-stranded DNA intermediates, that form during DNA replication or upon DNA stress. It prevents their reannealing and in parallel, recruits and activates different proteins and complexes involved in DNA metabolism. Thereby, it plays an essential role both in DNA replication and the cellular response to DNA damage. In the cellular response to DNA damage, the RPA complex controls DNA repair and DNA damage checkpoint activation. Through recruitment of ATRIP activates the ATR kinase a master regulator of the DNA damage response. It is required for the recruitment of the DNA double-strand break repair factors RAD51 and RAD52 to chromatin in response to DNA damage. Also recruits to sites of DNA damage proteins like XPA and XPG that are involved in nucleotide excision repair and is required for this mechanism of DNA repair. Also plays a role in base excision repair (BER) probably through interaction with UNG. Also recruits SMARCAL1/HARP, which is involved in replication fork restart, to sites of DNA damage. May also play a role in telomere maintenance. The protein is Replication protein A 70 kDa DNA-binding subunit (Rpa1) of Mus musculus (Mouse).